Consider the following 942-residue polypeptide: Diacylglycerol kinase theta (942 aa).

The segment at 1 to 59 (MAAAAEPGARAWLGGGSPRPGSPACSPVLGSGGRARPGPGPGPGPERAGVRAPGPAAAP) is disordered. 2 positions are modified to phosphoserine: Ser22 and Ser26. Positions 45 to 59 (PERAGVRAPGPAAAP) are enriched in low complexity. 3 Phorbol-ester/DAG-type zinc fingers span residues 60–108 (GHSF…RIPC), 121–168 (AHCF…CSDC), and 183–234 (HHHW…APEC). Residues 269–295 (EPGEGGDGADGSAAVGPGRETQATPES) are disordered. Residues 395-494 (AQEVLKIYPG…TRFYVAESRD (100 aa)) form the Ras-associating domain. Short sequence motifs (LXXLL motif) lie at residues 555–559 (LYMLL) and 574–578 (LPDLL). The DAGKc domain maps to 584 to 721 (PDSCPLLVFV…MDRWTILLDA (138 aa)). Residues 908-942 (PKVHMLRKAKQKPRRAGTTRDARADAAPAPESDPR) form a disordered region. The segment covering 911-924 (HMLRKAKQKPRRAG) has biased composition (basic residues). Residues 932–942 (DAAPAPESDPR) are compositionally biased toward low complexity.

Belongs to the eukaryotic diacylglycerol kinase family. Interacts with RHOA (constitutively activated, GTP-bound); the interaction inhibits DGKQ. Interacts with PRKCE. Interacts with PRKCH. Interacts with PLCB1. Interacts with NR5A1; the interaction requires both LXXLL motifs in DGKQ and is required for full phosphatidic acid-mediated activation of NR5A1. In terms of processing, phosphorylated by PRKCE and PRKCH in vitro.

It localises to the cytoplasm. Its subcellular location is the cytosol. The protein localises to the cell membrane. It is found in the synapse. The protein resides in the cytoskeleton. It localises to the nucleus. Its subcellular location is the nucleus speckle. The protein localises to the nucleus matrix. It catalyses the reaction a 1,2-diacyl-sn-glycerol + ATP = a 1,2-diacyl-sn-glycero-3-phosphate + ADP + H(+). It carries out the reaction a 1-O-alkyl-sn-glycerol + ATP = a 1-O-alkyl-sn-glycero-3-phosphate + ADP + H(+). The catalysed reaction is 1-O-alkyl-2-acyl-sn-glycerol + ATP = 1-O-alkyl-2-acyl-sn-glycero-3-phosphate + ADP + H(+). The enzyme catalyses 1,2-di-(9Z-octadecenoyl)-sn-glycerol + ATP = 1,2-di-(9Z-octadecenoyl)-sn-glycero-3-phosphate + ADP + H(+). It catalyses the reaction 1-O-hexadecyl-sn-glycerol + ATP = 1-O-hexadecyl-sn-glycero-3-phosphate + ADP + H(+). It carries out the reaction 1-O-hexadecyl-2-acetyl-sn-glycerol + ATP = 1-O-hexadecyl-2-acetyl-sn-glycero-3-phosphate + ADP + H(+). The catalysed reaction is 1-octadecanoyl-2-(5Z,8Z,11Z,14Z-eicosatetraenoyl)-sn-glycerol + ATP = 1-octadecanoyl-2-(5Z,8Z,11Z,14Z-eicosatetraenoyl)-sn-glycero-3-phosphate + ADP + H(+). It functions in the pathway lipid metabolism; glycerolipid metabolism. With respect to regulation, activated by phosphatidylserine. Functionally, diacylglycerol kinase that converts diacylglycerol/DAG into phosphatidic acid/phosphatidate/PA and regulates the respective levels of these two bioactive lipids. Thereby, acts as a central switch between the signaling pathways activated by these second messengers with different cellular targets and opposite effects in numerous biological processes. Within the adrenocorticotropic hormone signaling pathway, produces phosphatidic acid which in turn activates NR5A1 and subsequent steroidogenic gene transcription. Also functions downstream of the nerve growth factor signaling pathway being specifically activated in the nucleus by the growth factor. Through its diacylglycerol activity also regulates synaptic vesicle endocytosis. This Homo sapiens (Human) protein is Diacylglycerol kinase theta.